We begin with the raw amino-acid sequence, 505 residues long: uncharacterized protein (505 aa).

Residues 11-27 (IGIIGGGIVGWLAAIAL) traverse the membrane as a helical segment.

The protein localises to the membrane. This is an uncharacterized protein from Sinorhizobium fredii (strain NBRC 101917 / NGR234).